The sequence spans 348 residues: Nicotinate-nucleotide pyrophosphorylase [carboxylating], chloroplastic (348 aa).

The transit peptide at 1–41 directs the protein to the chloroplast; sequence MISVSRFLSPQFYAIPRSFVKMSASATQTAGEVSMGIKPPS. Substrate contacts are provided by residues Arg-139, 170–172, Arg-194, Lys-204, Glu-237, Asp-264, 296–298, and 317–319; these read TRK, SGN, and SGA.

This sequence belongs to the NadC/ModD family.

Its subcellular location is the plastid. It localises to the chloroplast. The enzyme catalyses nicotinate beta-D-ribonucleotide + CO2 + diphosphate = quinolinate + 5-phospho-alpha-D-ribose 1-diphosphate + 2 H(+). The protein operates within cofactor biosynthesis; NAD(+) biosynthesis; nicotinate D-ribonucleotide from quinolinate: step 1/1. In terms of biological role, involved in the biosynthesis of NAD(+). Catalyzes the conversion of quinolate to nicotinate to nicotinate beta-D-ribonucleotide. The protein is Nicotinate-nucleotide pyrophosphorylase [carboxylating], chloroplastic of Arabidopsis thaliana (Mouse-ear cress).